A 376-amino-acid polypeptide reads, in one-letter code: Deoxyuridine 5'-triphosphate nucleotidohydrolase (376 aa).

This sequence belongs to the dUTPase family. The cofactor is Mg(2+).

It carries out the reaction dUTP + H2O = dUMP + diphosphate + H(+). In terms of biological role, involved in nucleotide metabolism: produces dUMP, the immediate precursor of thymidine nucleotides and decreases the intracellular concentration of dUTP to avoid uracil incorporation into viral DNA. The sequence is that of Deoxyuridine 5'-triphosphate nucleotidohydrolase from Human herpesvirus 6B (strain Z29) (HHV-6 variant B).